The sequence spans 415 residues: tRNA(Ile2) 2-agmatinylcytidine synthetase TiaS (415 aa).

It belongs to the TiaS family.

Its subcellular location is the cytoplasm. It carries out the reaction cytidine(34) in tRNA(Ile2) + agmatine + ATP + H2O = 2-agmatinylcytidine(34) in tRNA(Ile2) + AMP + 2 phosphate + 2 H(+). Functionally, ATP-dependent agmatine transferase that catalyzes the formation of 2-agmatinylcytidine (agm2C) at the wobble position (C34) of tRNA(Ile2), converting the codon specificity from AUG to AUA. This chain is tRNA(Ile2) 2-agmatinylcytidine synthetase TiaS, found in Pyrobaculum neutrophilum (strain DSM 2338 / JCM 9278 / NBRC 100436 / V24Sta) (Thermoproteus neutrophilus).